The primary structure comprises 729 residues: Fatty acid oxidation complex subunit alpha (729 aa).

The interval 1 to 189 is enoyl-CoA hydratase/isomerase; sequence MLYKGDTLYL…KIGLVDGVVK (189 aa). D296 serves as a coordination point for substrate. Residues 311–729 form a 3-hydroxyacyl-CoA dehydrogenase region; the sequence is ETPKQAAVLG…ARPVGSLKTA (419 aa). NAD(+) is bound by residues M324, D343, 400-402, K407, and S429; that span reads VVE. The active-site For 3-hydroxyacyl-CoA dehydrogenase activity is the H450. N453 serves as a coordination point for NAD(+). 2 residues coordinate substrate: N500 and Y660. The tract at residues 708–729 is disordered; the sequence is RHNEPYYPPVEPARPVGSLKTA.

In the N-terminal section; belongs to the enoyl-CoA hydratase/isomerase family. It in the C-terminal section; belongs to the 3-hydroxyacyl-CoA dehydrogenase family. In terms of assembly, heterotetramer of two alpha chains (FadB) and two beta chains (FadA).

It carries out the reaction a (3S)-3-hydroxyacyl-CoA + NAD(+) = a 3-oxoacyl-CoA + NADH + H(+). The catalysed reaction is a (3S)-3-hydroxyacyl-CoA = a (2E)-enoyl-CoA + H2O. The enzyme catalyses a 4-saturated-(3S)-3-hydroxyacyl-CoA = a (3E)-enoyl-CoA + H2O. It catalyses the reaction (3S)-3-hydroxybutanoyl-CoA = (3R)-3-hydroxybutanoyl-CoA. It carries out the reaction a (3Z)-enoyl-CoA = a 4-saturated (2E)-enoyl-CoA. The catalysed reaction is a (3E)-enoyl-CoA = a 4-saturated (2E)-enoyl-CoA. The protein operates within lipid metabolism; fatty acid beta-oxidation. Involved in the aerobic and anaerobic degradation of long-chain fatty acids via beta-oxidation cycle. Catalyzes the formation of 3-oxoacyl-CoA from enoyl-CoA via L-3-hydroxyacyl-CoA. It can also use D-3-hydroxyacyl-CoA and cis-3-enoyl-CoA as substrate. This Salmonella newport (strain SL254) protein is Fatty acid oxidation complex subunit alpha.